The following is a 686-amino-acid chain: MTKSIYFSLGIHNHQPVGNFDFVIERAYEMSYKPLINFFFKHPDFPINVHFSGFLLLWLEKNHPEYFEKLKIMAERGQIEFVSGGFYEPILPIIPDKDKVQQIKKLNKYIYDKFGQTPKGMWLAERVWEPHLVKYIAEAGIEYVVVDDAHFFSVGLKEEDLFGYYLMEEQGYKLAVFPISMKLRYLIPFADPEETITYLDKFASEDKSKIALLFDDGEKFGLWPDTYRTVYEEGWLETFVSKIKENFLLVTPVNLYTYMQRVKPKGRIYLPTASYREMMEWVLFPEAQKELEELVEKLKTENLWDKFSPYVKGGFWRNFLAKYDESNHMQKKMLYVWKKVQDSPNEEVKEKAMEEVFQGQANDAYWHGIFGGLYLPHLRTAIYEHLIKAENYLENSEIRFNIFDFDCDGNDEIIVESPFFNLYLSPNHGGSVLEWDFKTKAFNLTNVLTRRKEAYHSKLSYVTSEAQGKSIHERWTAKEEGLENILFYDNHRRVSFTEKIFESEPVLEDLWKDSSRLEVDSFYENYDYEINKDENKIRVLFSGVFRGFELCKSYILYKDKSFVDVVYEIKNVSETPISLNFGWEINLNFLAPNHPDYYFLIGDQKYPLSSFGIEKVNNWKIFSGIGIELECVLDVEASLYRYPIETVSLSEEGFERVYQGSALIHFYKVDLPVGSTWRTTIRFWVK.

Residue Glu125 is the Nucleophile of the active site. Residue Asp216 is the Proton donor of the active site.

It belongs to the glycosyl hydrolase 57 family.

It is found in the cytoplasm. It carries out the reaction Endohydrolysis of (1-&gt;4)-alpha-D-glucosidic linkages in polysaccharides containing three or more (1-&gt;4)-alpha-linked D-glucose units.. Its function is as follows. This amylase is a highly liquefying-type: oligomers appeared at the beginning of incubation, followed by a graded decrease in the amounts of maltotriose, maltose and glucose in prolonged incubation. In Dictyoglomus thermophilum (strain ATCC 35947 / DSM 3960 / H-6-12), this protein is Alpha-amylase 1 (amyA).